We begin with the raw amino-acid sequence, 372 residues long: Heat-inducible transcription repressor HrcA (372 aa).

It belongs to the HrcA family.

Functionally, negative regulator of class I heat shock genes (grpE-dnaK-dnaJ and groELS operons). Prevents heat-shock induction of these operons. In Chloroflexus aurantiacus (strain ATCC 29366 / DSM 635 / J-10-fl), this protein is Heat-inducible transcription repressor HrcA.